We begin with the raw amino-acid sequence, 646 residues long: Long-chain fatty acid transport protein 1 (646 aa).

The Extracellular segment spans residues 1 to 13 (MRTPGAGTASVAS). Residues 14–34 (LGLLWLLGLPWTWSAAAAFGV) traverse the membrane as a helical segment. Residues 35–646 (YVGSGGWRFL…ARICAGDFSL (612 aa)) are Cytoplasmic-facing. Residues 191-475 (EVSEQLGKSL…YVSDSATNKK (285 aa)) are sufficient for oligomerization. 246–257 (YIYTSGTTGLPK) provides a ligand contact to AMP.

The protein belongs to the ATP-dependent AMP-binding enzyme family. In terms of assembly, self-associates. May function as a homodimer. Interacts with EPRS1; mediates the translocation of SLC27A1 from the cytoplasm to the plasma membrane thereby increasing the uptake of long-chain fatty acids. Interacts with DGAT2 and this interaction is enhanced in the presence of ZFYVE1. Expressed in muscle.

The protein resides in the cell membrane. It is found in the endomembrane system. Its subcellular location is the cytoplasm. It catalyses the reaction a fatty acid(in) = a fatty acid(out). The enzyme catalyses (9Z)-octadecenoate(out) = (9Z)-octadecenoate(in). The catalysed reaction is hexadecanoate(out) = hexadecanoate(in). It carries out the reaction (5Z,8Z,11Z,14Z)-eicosatetraenoate(out) = (5Z,8Z,11Z,14Z)-eicosatetraenoate(in). It catalyses the reaction (9Z,12Z)-octadecadienoate(out) = (9Z,12Z)-octadecadienoate(in). The enzyme catalyses a long-chain fatty acid + ATP + CoA = a long-chain fatty acyl-CoA + AMP + diphosphate. The catalysed reaction is (5Z,8Z,11Z,14Z)-eicosatetraenoate + ATP + CoA = (5Z,8Z,11Z,14Z)-eicosatetraenoyl-CoA + AMP + diphosphate. It carries out the reaction a very long-chain fatty acid + ATP + CoA = a very long-chain fatty acyl-CoA + AMP + diphosphate. It catalyses the reaction tetracosanoate + ATP + CoA = tetracosanoyl-CoA + AMP + diphosphate. Inhibited by Triacsin C. In terms of biological role, mediates the import of long-chain fatty acids (LCFA) into the cell by facilitating their transport at the plasma membrane. Also functions as an acyl-CoA ligase catalyzing the ATP-dependent formation of fatty acyl-CoA using LCFA and very-long-chain fatty acids (VLCFA) as substrates, which prevents fatty acid efflux from cells and might drive more fatty acid uptake. May act directly as a bona fide transporter, or alternatively, in a cytoplasmic or membrane-associated multimeric protein complex to trap and draw fatty acids towards accumulation. Plays a pivotal role in regulating available LCFA substrates from exogenous sources in tissues undergoing high levels of beta-oxidation or triglyceride synthesis. May be involved in regulation of cholesterol metabolism. Probably involved in fatty acid transport across the blood barrier. The chain is Long-chain fatty acid transport protein 1 from Rattus norvegicus (Rat).